Here is a 604-residue protein sequence, read N- to C-terminus: NRPS-independent siderophore synthetase-like protein ankE (604 aa).

The catalysed reaction is cyclo(L-arginyl-(Z)-dehydro-4-O-homoseryl-tyrosyl) + citrate + ATP = NK13650 B + AMP + diphosphate + H(+). Its pathway is secondary metabolite biosynthesis. Functionally, NRPS-independent siderophore synthetase-like protein; part of the ank cluster that mediates the biosynthesis of NK13650 C, a highly modified cyclo-arginine-tyrosine dipeptide. AnkE is responsible of the production of NK13650 B via ligation of citrate to the ankD product. Within the pathway, the cyclodipeptide synthase ankA acts as the scaffold-generating enzyme and is responsible for formation of the cyclo-Arg-Tyr diketopiperazine (cRY) from L-Arg and L-Tyr. The ankA product cRY is desaturated by the cytochrome P450 monooxygenase ankB to yield a dehydro-cyclodipeptide intermediate. The FAD-dependent monooxygenase ankC then installs the m-OH, ankD catalyzes the attachment of L-homoserine, and ankE ligates citrate to the ankD product to yield NK13650 B. The O-methyltransferase ankF is responsible for methylation of the C-17 phenol group of NK13650 B to produce NK13650 D. Amidation of NK13650 D with L-Asp by ankG then leads to the production of NK13650 C, whereas amidation of NK13650 B produces NK13650 A. The sequence is that of NRPS-independent siderophore synthetase-like protein ankE from Aspergillus thermomutatus (Neosartorya pseudofischeri).